The primary structure comprises 310 residues: tRNA uridine(34) hydroxylase (310 aa).

One can recognise a Rhodanese domain in the interval K127 to N225. The active-site Cysteine persulfide intermediate is C185.

The protein belongs to the TrhO family.

It carries out the reaction uridine(34) in tRNA + AH2 + O2 = 5-hydroxyuridine(34) in tRNA + A + H2O. Functionally, catalyzes oxygen-dependent 5-hydroxyuridine (ho5U) modification at position 34 in tRNAs. The protein is tRNA uridine(34) hydroxylase of Prochlorococcus marinus (strain MIT 9215).